The following is a 266-amino-acid chain: Nickel import ATP-binding protein NikE (266 aa).

One can recognise an ABC transporter domain in the interval 4–252 (ISADNIVKIY…RHPASRLLRE (249 aa)). 45 to 52 (GRSGCGKS) serves as a coordination point for ATP.

It belongs to the ABC transporter superfamily. Nickel importer (TC 3.A.1.5.3) family. The complex is composed of two ATP-binding proteins (NikD and NikE), two transmembrane proteins (NikB and NikC) and a solute-binding protein (NikA).

It is found in the cell inner membrane. The catalysed reaction is Ni(2+)(out) + ATP + H2O = Ni(2+)(in) + ADP + phosphate + H(+). In terms of biological role, part of the ABC transporter complex NikABCDE involved in nickel import. Responsible for energy coupling to the transport system. The protein is Nickel import ATP-binding protein NikE of Brucella abortus (strain 2308).